The following is a 153-amino-acid chain: D-aminoacyl-tRNA deacylase (153 aa).

The Gly-cisPro motif, important for rejection of L-amino acids signature appears at 137-138; that stretch reads GP.

Belongs to the DTD family. Homodimer.

It localises to the cytoplasm. It carries out the reaction glycyl-tRNA(Ala) + H2O = tRNA(Ala) + glycine + H(+). The enzyme catalyses a D-aminoacyl-tRNA + H2O = a tRNA + a D-alpha-amino acid + H(+). An aminoacyl-tRNA editing enzyme that deacylates mischarged D-aminoacyl-tRNAs. Also deacylates mischarged glycyl-tRNA(Ala), protecting cells against glycine mischarging by AlaRS. Acts via tRNA-based rather than protein-based catalysis; rejects L-amino acids rather than detecting D-amino acids in the active site. By recycling D-aminoacyl-tRNA to D-amino acids and free tRNA molecules, this enzyme counteracts the toxicity associated with the formation of D-aminoacyl-tRNA entities in vivo and helps enforce protein L-homochirality. In Methylococcus capsulatus (strain ATCC 33009 / NCIMB 11132 / Bath), this protein is D-aminoacyl-tRNA deacylase.